Here is a 264-residue protein sequence, read N- to C-terminus: 3-methyl-2-oxobutanoate hydroxymethyltransferase (264 aa).

2 residues coordinate Mg(2+): Asp45 and Asp84. 3-methyl-2-oxobutanoate-binding positions include 45-46 (DS), Asp84, and Lys112. Glu114 lines the Mg(2+) pocket. Catalysis depends on Glu181, which acts as the Proton acceptor.

The protein belongs to the PanB family. As to quaternary structure, homodecamer; pentamer of dimers. It depends on Mg(2+) as a cofactor.

The protein resides in the cytoplasm. It carries out the reaction 3-methyl-2-oxobutanoate + (6R)-5,10-methylene-5,6,7,8-tetrahydrofolate + H2O = 2-dehydropantoate + (6S)-5,6,7,8-tetrahydrofolate. It participates in cofactor biosynthesis; (R)-pantothenate biosynthesis; (R)-pantoate from 3-methyl-2-oxobutanoate: step 1/2. In terms of biological role, catalyzes the reversible reaction in which hydroxymethyl group from 5,10-methylenetetrahydrofolate is transferred onto alpha-ketoisovalerate to form ketopantoate. This chain is 3-methyl-2-oxobutanoate hydroxymethyltransferase, found in Cronobacter sakazakii (strain ATCC BAA-894) (Enterobacter sakazakii).